Consider the following 132-residue polypeptide: Large ribosomal subunit protein bL17 (132 aa).

It belongs to the bacterial ribosomal protein bL17 family. As to quaternary structure, part of the 50S ribosomal subunit. Contacts protein L32.

The protein is Large ribosomal subunit protein bL17 of Shewanella sediminis (strain HAW-EB3).